We begin with the raw amino-acid sequence, 321 residues long: NADH-ubiquinone oxidoreductase chain 1 (321 aa).

The next 8 helical transmembrane spans lie at 5-25 (LVTL…AFLT), 74-94 (LLIL…APIP), 104-124 (LGLL…LWAG), 151-171 (GIIL…LLTI), 175-195 (YTWL…STLA), 227-247 (FFLA…ILFI), 256-276 (ELFL…FLWI), and 296-316 (FLPM…SISG).

Belongs to the complex I subunit 1 family.

It is found in the mitochondrion inner membrane. The enzyme catalyses a ubiquinone + NADH + 5 H(+)(in) = a ubiquinol + NAD(+) + 4 H(+)(out). In terms of biological role, core subunit of the mitochondrial membrane respiratory chain NADH dehydrogenase (Complex I) that is believed to belong to the minimal assembly required for catalysis. Complex I functions in the transfer of electrons from NADH to the respiratory chain. The immediate electron acceptor for the enzyme is believed to be ubiquinone. The protein is NADH-ubiquinone oxidoreductase chain 1 (MT-ND1) of Varanus baritji (Black-spotted ridge-tailed monitor).